We begin with the raw amino-acid sequence, 164 residues long: MNEKFSGKVWVLGDDIDTDIIIPTEYLALKTVEDMKPYAFSPLRPELAGQIKPGDIIVAGKNFGCGSSREQAPEVIKALGIKCVIAKSYARIFFRNSINNGLLLIENADLHDEVTEGDTIDVEVNAKITHNGKAYPIASLPDNLVDILNAGGLVKAMRKLNGLD.

Belongs to the LeuD family. LeuD type 2 subfamily. As to quaternary structure, heterodimer of LeuC and LeuD.

It carries out the reaction (2R,3S)-3-isopropylmalate = (2S)-2-isopropylmalate. It participates in amino-acid biosynthesis; L-leucine biosynthesis; L-leucine from 3-methyl-2-oxobutanoate: step 2/4. Its function is as follows. Catalyzes the isomerization between 2-isopropylmalate and 3-isopropylmalate, via the formation of 2-isopropylmaleate. The protein is 3-isopropylmalate dehydratase small subunit of Lachnospira eligens (strain ATCC 27750 / DSM 3376 / VPI C15-48 / C15-B4) (Eubacterium eligens).